The following is a 76-amino-acid chain: MLILGRRKGESILIGDDIEITIVDIQGDYIRMGIQAPREVSIVRKEIKEQIREENIKAAEKPEGLPALLEEMKKFI.

It belongs to the CsrA/RsmA family. As to quaternary structure, homodimer; the beta-strands of each monomer intercalate to form a hydrophobic core, while the alpha-helices form wings that extend away from the core.

Its subcellular location is the cytoplasm. Its function is as follows. A translational regulator that binds mRNA to regulate translation initiation and/or mRNA stability. Usually binds in the 5'-UTR at or near the Shine-Dalgarno sequence preventing ribosome-binding, thus repressing translation. Its main target seems to be the major flagellin gene, while its function is anatagonized by FliW. The chain is Translational regulator CsrA from Syntrophomonas wolfei subsp. wolfei (strain DSM 2245B / Goettingen).